A 441-amino-acid polypeptide reads, in one-letter code: Sec-independent protein translocase protein TatCo (441 aa).

Residues 1-185 (MADEERDAGL…LVGEAPESDQ (185 aa)) form a disordered region. Acidic residues predominate over residues 13–22 (ADDETDASDD). Basic and acidic residues predominate over residues 51 to 62 (TPRDETVTHGSD). A compositionally biased stretch (acidic residues) spans 75–104 (DNGDDSDSDTDAAPDDADDSATDSDADSDD). Positions 105–117 (EPRLLADDEHTSH) are enriched in basic and acidic residues. Acidic residues-rich tracts occupy residues 122-138 (TYDDSSDESADDVDPDA) and 164-173 (EDADFDDEDV). 6 consecutive transmembrane segments (helical) span residues 200 to 220 (LAVVLGVAGAITLVLFPGADI), 276 to 296 (VAGLAGTVIGLPVFVYETYLF), 317 to 337 (LVLALVGVLFAHFVVLPAIFA), 357 to 377 (FNLILILMGYMAVVFQIPLFV), 395 to 415 (RLLFWGAFLGLAFLVSPDPTG), and 416 to 436 (MAPIIIGATMITLFEGTLAAL).

Belongs to the TatC family. Forms a complex with TatA.

The protein resides in the cell membrane. In terms of biological role, part of the twin-arginine translocation (Tat) system that transports large folded proteins containing a characteristic twin-arginine motif in their signal peptide across membranes. This is Sec-independent protein translocase protein TatCo from Haloferax volcanii (strain ATCC 29605 / DSM 3757 / JCM 8879 / NBRC 14742 / NCIMB 2012 / VKM B-1768 / DS2) (Halobacterium volcanii).